A 387-amino-acid polypeptide reads, in one-letter code: Probable serine/threonine-protein kinase RIO1 homolog (387 aa).

Residues Val41–Asn387 enclose the Protein kinase domain. Lys91 is an ATP binding site. Asp204 acts as the Proton acceptor in catalysis. Asn209 and Asp221 together coordinate Mg(2+). Asp221 (4-aspartylphosphate intermediate) is an active-site residue. The tract at residues Glu309 to Lys372 is disordered. The span at Ser312–Thr321 shows a compositional bias: low complexity. Basic residues predominate over residues Ile361–Lys372.

The protein belongs to the protein kinase superfamily. RIO-type Ser/Thr kinase family. It depends on Mg(2+) as a cofactor.

The protein resides in the cytoplasm. It carries out the reaction L-seryl-[protein] + ATP = O-phospho-L-seryl-[protein] + ADP + H(+). It catalyses the reaction L-threonyl-[protein] + ATP = O-phospho-L-threonyl-[protein] + ADP + H(+). The enzyme catalyses ATP + H2O = ADP + phosphate + H(+). Its function is as follows. Required for the final endonucleolytic cleavage at site D converting 20S pre-rRNA into the mature 18S rRNA. Required for the final steps of cytoplasmic maturation of the 40S ribosomal subunit. Despite the protein kinase domain is proposed to act predominantly as an ATPase. Has a role in the cell cycle where it is required for entrance into S-phase and in the control of the onset of anaphase. Appears to also be involved in the maintenance of chromosome stability and correct mitotic segregation. The protein is Probable serine/threonine-protein kinase RIO1 homolog (RIO1) of Encephalitozoon cuniculi (strain GB-M1) (Microsporidian parasite).